The primary structure comprises 331 residues: UDP-GalNAc:beta-1,3-N-acetylgalactosaminyltransferase 1 (331 aa).

Topologically, residues 1–20 (MASALWTVLPSRMSLRSLKW) are cytoplasmic. A helical; Signal-anchor for type II membrane protein membrane pass occupies residues 21–43 (SLLLLSLLSFFVMWYLSLPHYNV). Topologically, residues 44 to 331 (IERVNWMYFY…VMLRNTTCHY (288 aa)) are lumenal. N-linked (GlcNAc...) asparagine glycans are attached at residues asparagine 72, asparagine 154, asparagine 198, asparagine 212, and asparagine 326.

Belongs to the glycosyltransferase 31 family. Requires Mg(2+) as cofactor. As to expression, higher expression in heart and brain, and to a lesser extent in lung, placenta, kidney and testis. Lower expression in liver, spleen and stomach. No expression in skeletal muscle.

Its subcellular location is the golgi apparatus membrane. The enzyme catalyses a globoside Gb3Cer (d18:1(4E)) + UDP-N-acetyl-alpha-D-galactosamine = a globoside Gb4Cer (d18:1(4E)) + UDP + H(+). The protein operates within protein modification; protein glycosylation. Its function is as follows. Transfers N-acetylgalactosamine onto globotriaosylceramide. Plays a critical role in preimplantation stage embryonic development. In Homo sapiens (Human), this protein is UDP-GalNAc:beta-1,3-N-acetylgalactosaminyltransferase 1.